The sequence spans 392 residues: Speckle-type POZ protein-like A (392 aa).

An MATH domain is found at lysine 31–valine 161. One can recognise a BTB domain in the interval threonine 200–glutamate 267.

Belongs to the Tdpoz family. Homodimer. Heterodimer with SPOP. Component of cullin-RING-based BCR (BTB-CUL3-RBX1) E3 ubiquitin-protein ligase complexes containing homodimeric SPOPL or the heterodimer formed by SPOP and SPOPL.

The protein localises to the nucleus. It participates in protein modification; protein ubiquitination. Its function is as follows. Component of a cullin-RING-based BCR (BTB-CUL3-RBX1) E3 ubiquitin-protein ligase complex that mediates the ubiquitination and subsequent proteasomal degradation of target proteins, but with relatively low efficiency. The polypeptide is Speckle-type POZ protein-like A (spopla) (Danio rerio (Zebrafish)).